The following is a 330-amino-acid chain: Aquaporin Lacbi1:307192 (330 aa).

Topologically, residues M1–E40 are cytoplasmic. Residues A41–G61 form a helical membrane-spanning segment. At N62–S71 the chain is on the extracellular side. Residues V72–A92 traverse the membrane as a helical segment. Residues T93–Q124 lie on the Cytoplasmic side of the membrane. The NPA 1 motif lies at N99–C101. The chain crosses the membrane as a helical span at residues I125–E145. Residues S146–E157 lie on the Extracellular side of the membrane. Residues T158 to A178 form a helical membrane-spanning segment. Residues Q179–R183 lie on the Cytoplasmic side of the membrane. Residues A184–D204 form a helical membrane-spanning segment. Topologically, residues P205–S207 are extracellular. A helical transmembrane segment spans residues F208–W228. Over G229–A264 the chain is Cytoplasmic. Residues N238–A240 carry the NPA 2 motif. A helical transmembrane segment spans residues I265–L285. The Extracellular segment spans residues V286–V330. A disordered region spans residues R308–V330. A compositionally biased stretch (basic and acidic residues) spans Q312–V330.

The protein belongs to the MIP/aquaporin (TC 1.A.8) family.

The protein localises to the membrane. Water channel-like protein that does not show transport of water nor ammonium across membranes. The sequence is that of Aquaporin Lacbi1:307192 from Laccaria bicolor (strain S238N-H82 / ATCC MYA-4686) (Bicoloured deceiver).